A 168-amino-acid chain; its full sequence is Replicase polyprotein 1ab (168 aa).

The 165-residue stretch at 1-165 (PNTKSIDGEN…KLLNFGNHLV (165 aa)) folds into the Nidovirus-type SAM-dependent 2'-O-MTase domain.

Functionally, the replicase polyprotein of coronaviruses is a multifunctional protein: it contains the activities necessary for the transcription of negative stranded RNA, leader RNA, subgenomic mRNAs and progeny virion RNA as well as proteinases responsible for the cleavage of the polyprotein into functional products. The protein is Replicase polyprotein 1ab (rep) of Canine coronavirus (strain Insavc-1) (CCoV).